Reading from the N-terminus, the 357-residue chain is Peptide chain release factor 1 (357 aa).

Residue Q234 is modified to N5-methylglutamine.

Belongs to the prokaryotic/mitochondrial release factor family. In terms of processing, methylated by PrmC. Methylation increases the termination efficiency of RF1.

It localises to the cytoplasm. In terms of biological role, peptide chain release factor 1 directs the termination of translation in response to the peptide chain termination codons UAG and UAA. The protein is Peptide chain release factor 1 of Alkaliphilus oremlandii (strain OhILAs) (Clostridium oremlandii (strain OhILAs)).